The following is a 594-amino-acid chain: Potassium-transporting ATPase potassium-binding subunit (594 aa).

12 helical membrane passes run 4-24, 65-85, 136-156, 179-199, 287-307, 314-334, 361-381, 390-410, 413-433, 450-470, 518-538, and 560-580; these read QFFG…PFLG, QYAV…YALQ, ALTV…FALI, LYVL…QGVI, LEML…GEMV, VAIL…TQNA, FGVA…CGAV, AMGG…FGGV, GLYG…LMIG, MVSI…ALAV, LLGL…LALA, and LFIV…YVPA.

Belongs to the KdpA family. In terms of assembly, the system is composed of three essential subunits: KdpA, KdpB and KdpC.

Its subcellular location is the cell inner membrane. Functionally, part of the high-affinity ATP-driven potassium transport (or Kdp) system, which catalyzes the hydrolysis of ATP coupled with the electrogenic transport of potassium into the cytoplasm. This subunit binds the periplasmic potassium ions and delivers the ions to the membrane domain of KdpB through an intramembrane tunnel. In Bordetella avium (strain 197N), this protein is Potassium-transporting ATPase potassium-binding subunit.